The chain runs to 321 residues: Basic leucine zipper 34 (321 aa).

A disordered region spans residues threonine 97–arginine 189. 3 stretches are compositionally biased toward low complexity: residues asparagine 110–asparagine 133, asparagine 145–asparagine 155, and serine 172–asparagine 182. One can recognise a bZIP domain in the interval aspartate 186 to glutamine 238. A basic motif region spans residues lysine 188–lysine 207. The leucine-zipper stretch occupies residues leucine 214–leucine 235.

Forms heterodimers with BZIP18, BZIP43 and VIP1/BZIP51. As to expression, expressed in vascular tissues of leaves, stems and siliques, anthers, filaments, tapetum, mature pollen grains, pistil vascular tissues and papillar cells, and funiculi.

It is found in the nucleus. Functionally, transcriptional activator involved in the sporophytic control of cell wall patterning and gametophytic control of pollen development. May play a role in the control of metabolic pathways regulating cellular transport and lipid metabolism. The polypeptide is Basic leucine zipper 34 (Arabidopsis thaliana (Mouse-ear cress)).